Consider the following 505-residue polypeptide: Geissoschizine oxidase (505 aa).

The helical transmembrane segment at 9–29 (FSSPAFFLLLPFLFLLIKPLI) threads the bilayer. Residue Cys443 participates in heme binding.

The protein belongs to the cytochrome P450 family. Heme serves as cofactor. In terms of tissue distribution, mainly expressed in roots.

It is found in the membrane. It carries out the reaction (19E)-geissoschizine + reduced [NADPH--hemoprotein reductase] + O2 = akuammicine + formate + oxidized [NADPH--hemoprotein reductase] + H2O + H(+). The enzyme catalyses (19E)-geissoschizine + reduced [NADPH--hemoprotein reductase] + O2 = 3,17-didehydrostemmadenine + oxidized [NADPH--hemoprotein reductase] + 2 H2O. It catalyses the reaction 3,17-didehydrostemmadenine = 17-dehydropreakuammicine. It participates in alkaloid biosynthesis. Its function is as follows. Monooxygenase involved in the biosynthesis of curare monoterpene indole alkaloids (MIAs), natural products such as strychnine, a neurotoxic compound used as a pesticide to control rodents, and its pharmacologically active derivatives, including brucine, used to regulate blood pressure. Curare alkaloids act as animal glycine receptor antagonists. Catalyzes the conversion of geissoschizine to dehydropreakuammicine by cyclization, which is spontaneously converted into akuammicine by aromatization. This chain is Geissoschizine oxidase, found in Strychnos nux-vomica (Poison nut).